The sequence spans 408 residues: LL-diaminopimelate aminotransferase (408 aa).

Positions 15 and 42 each coordinate substrate. Residues tyrosine 72, 108-109 (SK), tyrosine 132, asparagine 187, tyrosine 218, and 246-248 (SFS) each bind pyridoxal 5'-phosphate. Substrate contacts are provided by lysine 109, tyrosine 132, and asparagine 187. The residue at position 249 (lysine 249) is an N6-(pyridoxal phosphate)lysine. Pyridoxal 5'-phosphate is bound by residues arginine 257 and asparagine 292. 2 residues coordinate substrate: asparagine 292 and arginine 388.

The protein belongs to the class-I pyridoxal-phosphate-dependent aminotransferase family. LL-diaminopimelate aminotransferase subfamily. As to quaternary structure, homodimer. It depends on pyridoxal 5'-phosphate as a cofactor.

The enzyme catalyses (2S,6S)-2,6-diaminopimelate + 2-oxoglutarate = (S)-2,3,4,5-tetrahydrodipicolinate + L-glutamate + H2O + H(+). The protein operates within amino-acid biosynthesis; L-lysine biosynthesis via DAP pathway; LL-2,6-diaminopimelate from (S)-tetrahydrodipicolinate (aminotransferase route): step 1/1. Involved in the synthesis of meso-diaminopimelate (m-DAP or DL-DAP), required for both lysine and peptidoglycan biosynthesis. Catalyzes the direct conversion of tetrahydrodipicolinate to LL-diaminopimelate. The polypeptide is LL-diaminopimelate aminotransferase (Synechococcus sp. (strain CC9311)).